Reading from the N-terminus, the 129-residue chain is Small ribosomal subunit protein eS6 (129 aa).

It belongs to the eukaryotic ribosomal protein eS6 family.

This chain is Small ribosomal subunit protein eS6, found in Archaeoglobus fulgidus (strain ATCC 49558 / DSM 4304 / JCM 9628 / NBRC 100126 / VC-16).